A 244-amino-acid chain; its full sequence is Carboxy-S-adenosyl-L-methionine synthase (244 aa).

S-adenosyl-L-methionine is bound by residues tyrosine 40, 65–67 (GCS), 90–91 (DN), asparagine 134, and arginine 201.

This sequence belongs to the class I-like SAM-binding methyltransferase superfamily. Cx-SAM synthase family. As to quaternary structure, homodimer.

The enzyme catalyses prephenate + S-adenosyl-L-methionine = carboxy-S-adenosyl-L-methionine + 3-phenylpyruvate + H2O. In terms of biological role, catalyzes the conversion of S-adenosyl-L-methionine (SAM) to carboxy-S-adenosyl-L-methionine (Cx-SAM). The chain is Carboxy-S-adenosyl-L-methionine synthase from Citrifermentans bemidjiense (strain ATCC BAA-1014 / DSM 16622 / JCM 12645 / Bem) (Geobacter bemidjiensis).